Reading from the N-terminus, the 69-residue chain is uncharacterized protein (69 aa).

This is an uncharacterized protein from Lepidoptera (butterflies and moths).